We begin with the raw amino-acid sequence, 424 residues long: Hemagglutinin-esterase (424 aa).

2 consecutive signal peptides follow at residues 1–16 (MFLL…IIGS) and 1–18 (MFLL…GSLG). Residues 7 to 127 (FVLVSCIIGS…SNDIWMQNKG (121 aa)) form an esterase domain 1 region. The Virion surface portion of the chain corresponds to 17–392 (LGFDNPPTNV…PICVYDPLPL (376 aa)). Residue Ser40 is the Nucleophile of the active site. Residues Cys44 and Cys65 are joined by a disulfide bond. Asn54, Asn89, Asn153, Asn236, and Asn301 each carry an N-linked (GlcNAc...) asparagine; by host glycan. 3 disulfide bridges follow: Cys113-Cys162, Cys197-Cys276, and Cys205-Cys249. Residues 128–266 (LFYTQVYKNM…GNYLAISNEL (139 aa)) are receptor binding. The interval 267–379 (LLTVPTKAIC…RCPTAADINT (113 aa)) is esterase domain 2. Cys307 and Cys312 are oxidised to a cystine. Asn316 carries an N-linked (GlcNAc...) asparagine; by host glycan. Active-site charge relay system residues include Asp326 and His329. A disulfide bridge links Cys347 with Cys371. A glycan (N-linked (GlcNAc...) asparagine; by host) is linked at Asn358. The chain crosses the membrane as a helical span at residues 393-413 (ILLGILLGVAVIIIVVLLLYF). The Intravirion segment spans residues 414-424 (MVDNGTRLHDA). Residue Asn417 is glycosylated (N-linked (GlcNAc...) asparagine; by host).

It belongs to the influenza type C/coronaviruses hemagglutinin-esterase family. As to quaternary structure, homodimer; disulfide-linked. Forms a complex with the M protein in the pre-Golgi. Associates then with S-M complex to form a ternary complex S-M-HE. In terms of processing, N-glycosylated in the host RER.

Its subcellular location is the virion membrane. The protein localises to the host cell membrane. It carries out the reaction N-acetyl-9-O-acetylneuraminate + H2O = N-acetylneuraminate + acetate + H(+). It catalyses the reaction N-acetyl-4-O-acetylneuraminate + H2O = N-acetylneuraminate + acetate + H(+). Structural protein that makes short spikes at the surface of the virus. Contains receptor binding and receptor-destroying activities. Mediates de-O-acetylation of N-acetyl-4-O-acetylneuraminic acid, which is probably the receptor determinant recognized by the virus on the surface of erythrocytes and susceptible cells. This receptor-destroying activity is important for virus release as it probably helps preventing self-aggregation and ensures the efficient spread of the progeny virus from cell to cell. May serve as a secondary viral attachment protein for initiating infection, the spike protein being the major one. May become a target for both the humoral and the cellular branches of the immune system. The chain is Hemagglutinin-esterase from Bos taurus (Bovine).